Reading from the N-terminus, the 322-residue chain is Glycerol-3-phosphate dehydrogenase [NAD(P)+] (322 aa).

The NADPH site is built by Trp13, His33, and Lys99. Residues Lys99, Gly127, and Ser129 each coordinate sn-glycerol 3-phosphate. Ala131 contacts NADPH. Sn-glycerol 3-phosphate is bound by residues Lys182, Asp235, Ser245, Arg246, and Asn247. Catalysis depends on Lys182, which acts as the Proton acceptor. Position 246 (Arg246) interacts with NADPH. Glu272 contacts NADPH.

The protein belongs to the NAD-dependent glycerol-3-phosphate dehydrogenase family.

Its subcellular location is the cytoplasm. It carries out the reaction sn-glycerol 3-phosphate + NAD(+) = dihydroxyacetone phosphate + NADH + H(+). It catalyses the reaction sn-glycerol 3-phosphate + NADP(+) = dihydroxyacetone phosphate + NADPH + H(+). It functions in the pathway membrane lipid metabolism; glycerophospholipid metabolism. In terms of biological role, catalyzes the reduction of the glycolytic intermediate dihydroxyacetone phosphate (DHAP) to sn-glycerol 3-phosphate (G3P), the key precursor for phospholipid synthesis. The sequence is that of Glycerol-3-phosphate dehydrogenase [NAD(P)+] from Ruthia magnifica subsp. Calyptogena magnifica.